The chain runs to 381 residues: S-(hydroxymethyl)glutathione dehydrogenase (381 aa).

Cys49 is a Zn(2+) binding site. His50 provides a ligand contact to NAD(+). Zn(2+) contacts are provided by His71, Glu72, Cys101, Cys104, Cys107, Cys115, and Cys178. NAD(+)-binding positions include 203-208, Asp227, and 298-300; these read GGGIVG and IGV.

This sequence belongs to the zinc-containing alcohol dehydrogenase family. Class-III subfamily. Requires Zn(2+) as cofactor.

The enzyme catalyses a primary alcohol + NAD(+) = an aldehyde + NADH + H(+). It catalyses the reaction a secondary alcohol + NAD(+) = a ketone + NADH + H(+). The catalysed reaction is S-(hydroxymethyl)glutathione + NADP(+) = S-formylglutathione + NADPH + H(+). It carries out the reaction S-(hydroxymethyl)glutathione + NAD(+) = S-formylglutathione + NADH + H(+). The enzyme catalyses S-nitrosoglutathione + NADH + H(+) = S-(hydroxysulfenamide)glutathione + NAD(+). Oxidizes long-chain alcohols and, in the presence of glutathione, is able to oxidize formaldehyde. Also acts as a S-nitroso-glutathione reductase by catalyzing the NADH-dependent reduction of S-nitrosoglutathione, thereby regulating protein S-nitrosylation. The chain is S-(hydroxymethyl)glutathione dehydrogenase (FDH1) from Candida maltosa (Yeast).